The following is a 385-amino-acid chain: Tryptophan--tRNA ligase (385 aa).

The short motif at 82–90 (PSGPMHIGH) is the 'HIGH' region element. A 'KMSKS' region motif is present at residues 253–257 (KMSAS).

Belongs to the class-I aminoacyl-tRNA synthetase family.

It localises to the cytoplasm. The catalysed reaction is tRNA(Trp) + L-tryptophan + ATP = L-tryptophyl-tRNA(Trp) + AMP + diphosphate + H(+). The chain is Tryptophan--tRNA ligase from Pyrococcus abyssi (strain GE5 / Orsay).